The sequence spans 357 residues: uncharacterized protein (357 aa).

The segment at 120-145 (SSSTVNHDQPAEQPSDKSTDDSTGYP) is disordered.

This is an uncharacterized protein from Caenorhabditis elegans.